Here is a 311-residue protein sequence, read N- to C-terminus: Aspartate carbamoyltransferase catalytic subunit (311 aa).

Arg55 and Thr56 together coordinate carbamoyl phosphate. Lys85 contributes to the L-aspartate binding site. Positions 106, 135, and 138 each coordinate carbamoyl phosphate. L-aspartate is bound by residues Arg168 and Arg230. 2 residues coordinate carbamoyl phosphate: Leu268 and Pro269.

The protein belongs to the aspartate/ornithine carbamoyltransferase superfamily. ATCase family. Heterododecamer (2C3:3R2) of six catalytic PyrB chains organized as two trimers (C3), and six regulatory PyrI chains organized as three dimers (R2).

The enzyme catalyses carbamoyl phosphate + L-aspartate = N-carbamoyl-L-aspartate + phosphate + H(+). Its pathway is pyrimidine metabolism; UMP biosynthesis via de novo pathway; (S)-dihydroorotate from bicarbonate: step 2/3. In terms of biological role, catalyzes the condensation of carbamoyl phosphate and aspartate to form carbamoyl aspartate and inorganic phosphate, the committed step in the de novo pyrimidine nucleotide biosynthesis pathway. The polypeptide is Aspartate carbamoyltransferase catalytic subunit (Salmonella paratyphi C (strain RKS4594)).